The following is a 1052-amino-acid chain: Membrane-bound transcription factor site-1 protease (1052 aa).

The N-terminal stretch at 1–17 (MKLVSTWLLVLVVLLCG) is a signal peptide. A propeptide spanning residues 18-186 (KRHLGDRLGT…TGRHSSRRLL (169 aa)) is cleaved from the precursor. N148 is a glycosylation site (N-linked (GlcNAc...) asparagine). S168 carries the phosphoserine modification. Residues 187-999 (RAIPRQVAQT…MPGRYNQEVG (813 aa)) lie on the Lumenal side of the membrane. A Peptidase S8 domain is found at 190–472 (PRQVAQTLQA…HGKLDLLRAY (283 aa)). The active-site Charge relay system is the D218. N236 carries N-linked (GlcNAc...) asparagine glycosylation. The active-site Charge relay system is H249. An N-linked (GlcNAc...) asparagine glycan is attached at N305. S414 (charge relay system) is an active-site residue. 2 N-linked (GlcNAc...) asparagine glycosylation sites follow: N515 and N728. Polar residues predominate over residues 877 to 887 (PSLSHSGNRQR). Positions 877-900 (PSLSHSGNRQRPPSGAGLAPPERM) are disordered. N939 is a glycosylation site (N-linked (GlcNAc...) asparagine). A helical membrane pass occupies residues 1000 to 1022 (QTIPVFAFLGAMVALAFFVVQIS). Topologically, residues 1023–1052 (KAKSRPKRRRPRAKRPQLAQQAHPARTPSV) are cytoplasmic. Basic residues predominate over residues 1026–1037 (SRPKRRRPRAKR). The interval 1026 to 1052 (SRPKRRRPRAKRPQLAQQAHPARTPSV) is disordered.

It belongs to the peptidase S8 family. Interacts with LYSET; this interaction bridges GNPTAB to MBTPS1. Requires Ca(2+) as cofactor. The 148 kDa zymogen is processed progressively into two membrane-bound 120 and 106 kDa forms in the endoplasmic reticulum, and late into a secreted 98 kDa form. The propeptide is autocatalytically removed through an intramolecular cleavage after Leu-186. Further cleavage generates 14, 10, and 8 kDa intermediates.

It is found in the endoplasmic reticulum membrane. The protein resides in the golgi apparatus membrane. It catalyses the reaction Processes precursors containing basic and hydrophobic/aliphatic residues at P4 and P2, respectively, with a relatively relaxed acceptance of amino acids at P1 and P3.. With respect to regulation, inhibited by divalent copper and zinc ions, but not by nickel or cobalt. Inhibited by its prosegment, but not smaller fragments. Inhibited by 4-(2-aminoethyl)benzenesulfonyl fluoride (AEBSF), a serine protease inhibitor. Its function is as follows. Serine protease that cleaves after hydrophobic or small residues, provided that Arg or Lys is in position P4: known substrates include SREBF1/SREBP1, SREBF2/SREBP2, BDNF, GNPTAB, ATF6, ATF6B and FAM20C. Cleaves substrates after Arg-Ser-Val-Leu (SREBP2), Arg-His-Leu-Leu (ATF6), Arg-Gly-Leu-Thr (BDNF) and its own propeptide after Arg-Arg-Leu-Leu. Catalyzes the first step regulated intramembrane proteolysis activation of the sterol regulatory element-binding proteins (SREBPs) SREBF1/SREBP1 and SREBF2/SREBP2. Also mediates the first step of the regulated intramembrane proteolytic activation of the cyclic AMP-dependent transcription factor ATF-6 (ATF6 and ATF6B). Mediates the protein cleavage of GNPTAB into subunit alpha and beta, thereby participating in biogenesis of lysosomes. Cleaves the propeptide from FAM20C which is required for FAM20C secretion from the Golgi apparatus membrane and for enhancement of FAM20C kinase activity, promoting osteoblast differentiation and biomineralization. Involved in the regulation of M6P-dependent Golgi-to-lysosome trafficking of lysosomal enzymes. It is required for the activation of CREB3L2/BBF2H7, a transcriptional activator of MIA3/TANGO and other genes controlling mega vesicle formation. Therefore, it plays a key role in the regulation of mega vesicle-mediated collagen trafficking. In astrocytes and osteoblasts, upon DNA damage and ER stress, mediates the first step of the regulated intramembrane proteolytic activation of the transcription factor CREB3L1, leading to the inhibition of cell-cycle progression. This chain is Membrane-bound transcription factor site-1 protease (Mbtps1), found in Mus musculus (Mouse).